Consider the following 372-residue polypeptide: 4-hydroxy-3-methylbut-2-en-1-yl diphosphate synthase (flavodoxin) (372 aa).

4 residues coordinate [4Fe-4S] cluster: C270, C273, C305, and E312.

The protein belongs to the IspG family. [4Fe-4S] cluster is required as a cofactor.

The enzyme catalyses (2E)-4-hydroxy-3-methylbut-2-enyl diphosphate + oxidized [flavodoxin] + H2O + 2 H(+) = 2-C-methyl-D-erythritol 2,4-cyclic diphosphate + reduced [flavodoxin]. Its pathway is isoprenoid biosynthesis; isopentenyl diphosphate biosynthesis via DXP pathway; isopentenyl diphosphate from 1-deoxy-D-xylulose 5-phosphate: step 5/6. In terms of biological role, converts 2C-methyl-D-erythritol 2,4-cyclodiphosphate (ME-2,4cPP) into 1-hydroxy-2-methyl-2-(E)-butenyl 4-diphosphate. The chain is 4-hydroxy-3-methylbut-2-en-1-yl diphosphate synthase (flavodoxin) from Citrobacter koseri (strain ATCC BAA-895 / CDC 4225-83 / SGSC4696).